We begin with the raw amino-acid sequence, 313 residues long: Glucosyl-dolichyl phosphate glucuronosyltransferase (313 aa).

A helical membrane pass occupies residues 284–304; it reads LIAIFVFTAAVGFGYVYGLLT.

This sequence belongs to the glycosyltransferase 2 family.

Its subcellular location is the cell membrane. The catalysed reaction is an archaeal dolichyl alpha-D-glucosyl phosphate + UDP-alpha-D-glucuronate = an archaeal dolichyl beta-D-glucuronosyl-(1-&gt;4)-alpha-D-glucosyl phosphate + UDP + H(+). Its pathway is cell surface structure biogenesis; S-layer biogenesis. Its function is as follows. Involved in the protein N-glycosylation pathway responsible for the assembly and attachment of an N-linked pentasaccharide that decorates the S-layer glycoprotein and flagellins. Catalyzes the transfer of a glucuronate residue (GlcA) to a glucose residue already bound to a dolichol phosphate (DolP), a compound that serves as a glycan lipid carrier in Archaea. In vitro, is able to add GlcA to DolP-Glc in which the omega-position isoprene is not saturated. However, the likely physiological lipid substrate is alpha,omega-saturated. The protein is Glucosyl-dolichyl phosphate glucuronosyltransferase of Haloferax volcanii (strain ATCC 29605 / DSM 3757 / JCM 8879 / NBRC 14742 / NCIMB 2012 / VKM B-1768 / DS2) (Halobacterium volcanii).